Here is an 88-residue protein sequence, read N- to C-terminus: Small ribosomal subunit protein bS20 (88 aa).

Belongs to the bacterial ribosomal protein bS20 family.

Binds directly to 16S ribosomal RNA. This is Small ribosomal subunit protein bS20 from Coprothermobacter proteolyticus (strain ATCC 35245 / DSM 5265 / OCM 4 / BT).